We begin with the raw amino-acid sequence, 258 residues long: Phosphate import ATP-binding protein PstB (258 aa).

One can recognise an ABC transporter domain in the interval 5–247; it reads IDVSGLTAYY…SQIFSNPKEK (243 aa). 37–44 is a binding site for ATP; that stretch reads GPSGCGKS.

It belongs to the ABC transporter superfamily. Phosphate importer (TC 3.A.1.7) family. In terms of assembly, the complex is composed of two ATP-binding proteins (PstB), two transmembrane proteins (PstC and PstA) and a solute-binding protein (PstS).

Its subcellular location is the cell membrane. The enzyme catalyses phosphate(out) + ATP + H2O = ADP + 2 phosphate(in) + H(+). Functionally, part of the ABC transporter complex PstSACB involved in phosphate import. Responsible for energy coupling to the transport system. This is Phosphate import ATP-binding protein PstB from Frankia casuarinae (strain DSM 45818 / CECT 9043 / HFP020203 / CcI3).